A 215-amino-acid polypeptide reads, in one-letter code: Large ribosomal subunit protein uL3 (215 aa).

The interval 136–155 (GVSISHRSHGSTGQRQDPGK) is disordered. N5-methylglutamine is present on Q151.

Belongs to the universal ribosomal protein uL3 family. In terms of assembly, part of the 50S ribosomal subunit. Forms a cluster with proteins L14 and L19. Post-translationally, methylated by PrmB.

Its function is as follows. One of the primary rRNA binding proteins, it binds directly near the 3'-end of the 23S rRNA, where it nucleates assembly of the 50S subunit. This Rickettsia rickettsii (strain Iowa) protein is Large ribosomal subunit protein uL3.